Here is a 227-residue protein sequence, read N- to C-terminus: Ubiquitin-conjugating enzyme E2 6 (227 aa).

Residues 1 to 206 (MASKGAYKRL…NSKQSWVKSR (206 aa)) are Cytoplasmic-facing. A UBC core domain is found at 5 to 163 (GAYKRLMKEY…FPELIDKNRE (159 aa)). Cys-87 (glycyl thioester intermediate) is an active-site residue. A helical transmembrane segment spans residues 207–225 (WSIAVLVFFALALARFFGA).

Belongs to the ubiquitin-conjugating enzyme family.

It localises to the endoplasmic reticulum membrane. The catalysed reaction is S-ubiquitinyl-[E1 ubiquitin-activating enzyme]-L-cysteine + [E2 ubiquitin-conjugating enzyme]-L-cysteine = [E1 ubiquitin-activating enzyme]-L-cysteine + S-ubiquitinyl-[E2 ubiquitin-conjugating enzyme]-L-cysteine.. The protein operates within protein modification; protein ubiquitination. Catalyzes the covalent attachment of ubiquitin to other proteins. Functions in degradation of misfolded or regulated proteins localized in the endoplasmic reticulum (ER) lumen or membrane via the ubiquitin-proteasome system. Cognate E2 conjugating enzyme for the doa10 ubiquitin ligase complex, which is part of the ERAD-C pathway responsible for the rapid degradation of membrane proteins with misfolded cytoplasmic domains. The chain is Ubiquitin-conjugating enzyme E2 6 (ubc6) from Schizosaccharomyces pombe (strain 972 / ATCC 24843) (Fission yeast).